Consider the following 104-residue polypeptide: Putative zinc finger protein ORF104b (104 aa).

A C2H2-type zinc finger spans residues 62-85 (YECKYCHTRYLSHTGIVYHLEREH).

The polypeptide is Putative zinc finger protein ORF104b (Acidianus sp. F28 (AFV-2)).